The sequence spans 95 residues: Putative pterin-4-alpha-carbinolamine dehydratase (95 aa).

This sequence belongs to the pterin-4-alpha-carbinolamine dehydratase family.

The catalysed reaction is (4aS,6R)-4a-hydroxy-L-erythro-5,6,7,8-tetrahydrobiopterin = (6R)-L-erythro-6,7-dihydrobiopterin + H2O. This is Putative pterin-4-alpha-carbinolamine dehydratase from Nocardia farcinica (strain IFM 10152).